The following is a 559-amino-acid chain: Urocanate hydratase (559 aa).

Residues 53 to 54, Q131, 177 to 179, E197, R202, 243 to 244, 264 to 268, 274 to 275, and Y323 contribute to the NAD(+) site; these read GG, GMG, NA, QTSAH, and YL. Residue C411 is part of the active site. G493 is an NAD(+) binding site.

It belongs to the urocanase family. The cofactor is NAD(+).

Its subcellular location is the cytoplasm. It carries out the reaction 4-imidazolone-5-propanoate = trans-urocanate + H2O. It functions in the pathway amino-acid degradation; L-histidine degradation into L-glutamate; N-formimidoyl-L-glutamate from L-histidine: step 2/3. In terms of biological role, catalyzes the conversion of urocanate to 4-imidazolone-5-propionate. The polypeptide is Urocanate hydratase (Pseudomonas aeruginosa (strain ATCC 15692 / DSM 22644 / CIP 104116 / JCM 14847 / LMG 12228 / 1C / PRS 101 / PAO1)).